The chain runs to 427 residues: Enolase (427 aa).

Gln163 lines the (2R)-2-phosphoglycerate pocket. Residue Glu205 is the Proton donor of the active site. 3 residues coordinate Mg(2+): Asp242, Glu285, and Asp312. 4 residues coordinate (2R)-2-phosphoglycerate: Lys337, Arg366, Ser367, and Lys388. Lys337 functions as the Proton acceptor in the catalytic mechanism.

It belongs to the enolase family. Mg(2+) is required as a cofactor.

The protein resides in the cytoplasm. Its subcellular location is the secreted. It is found in the cell surface. The enzyme catalyses (2R)-2-phosphoglycerate = phosphoenolpyruvate + H2O. The protein operates within carbohydrate degradation; glycolysis; pyruvate from D-glyceraldehyde 3-phosphate: step 4/5. Functionally, catalyzes the reversible conversion of 2-phosphoglycerate (2-PG) into phosphoenolpyruvate (PEP). It is essential for the degradation of carbohydrates via glycolysis. The sequence is that of Enolase from Azorhizobium caulinodans (strain ATCC 43989 / DSM 5975 / JCM 20966 / LMG 6465 / NBRC 14845 / NCIMB 13405 / ORS 571).